The sequence spans 426 residues: Cdc25-like protein phosphatase twine (426 aa).

Residues 1–27 are disordered; it reads MASKRLMLDVEEEDDESGACGQENFDP. In terms of domain architecture, Rhodanese spans 265 to 371; that stretch reads SQGGYEIIDC…FFGLYSQLCQ (107 aa). The active site involves cysteine 318.

This sequence belongs to the MPI phosphatase family. As to expression, expressed in developing male and female germ cells.

The enzyme catalyses O-phospho-L-tyrosyl-[protein] + H2O = L-tyrosyl-[protein] + phosphate. Functionally, required during meiosis. Regulates the transition from the extended G2 phase to the onset of the first meiotic division. This Drosophila melanogaster (Fruit fly) protein is Cdc25-like protein phosphatase twine (twe).